A 509-amino-acid polypeptide reads, in one-letter code: ATP synthase subunit alpha (509 aa).

169–176 lines the ATP pocket; the sequence is GDRQTGKT.

The protein belongs to the ATPase alpha/beta chains family. As to quaternary structure, F-type ATPases have 2 components, CF(1) - the catalytic core - and CF(0) - the membrane proton channel. CF(1) has five subunits: alpha(3), beta(3), gamma(1), delta(1), epsilon(1). CF(0) has four main subunits: a(1), b(1), b'(1) and c(9-12).

It is found in the cell inner membrane. It catalyses the reaction ATP + H2O + 4 H(+)(in) = ADP + phosphate + 5 H(+)(out). Its function is as follows. Produces ATP from ADP in the presence of a proton gradient across the membrane. The alpha chain is a regulatory subunit. The sequence is that of ATP synthase subunit alpha from Bradyrhizobium sp. (strain BTAi1 / ATCC BAA-1182).